The chain runs to 421 residues: Enolase (421 aa).

Residue Gln-165 participates in (2R)-2-phosphoglycerate binding. The active-site Proton donor is Glu-207. The Mg(2+) site is built by Asp-244, Glu-285, and Asp-312. Lys-337, Arg-366, Ser-367, and Lys-388 together coordinate (2R)-2-phosphoglycerate. Lys-337 acts as the Proton acceptor in catalysis.

It belongs to the enolase family. Mg(2+) is required as a cofactor.

The protein localises to the cytoplasm. Its subcellular location is the secreted. The protein resides in the cell surface. It catalyses the reaction (2R)-2-phosphoglycerate = phosphoenolpyruvate + H2O. It functions in the pathway carbohydrate degradation; glycolysis; pyruvate from D-glyceraldehyde 3-phosphate: step 4/5. Its function is as follows. Catalyzes the reversible conversion of 2-phosphoglycerate (2-PG) into phosphoenolpyruvate (PEP). It is essential for the degradation of carbohydrates via glycolysis. This chain is Enolase, found in Ehrlichia ruminantium (strain Welgevonden).